Reading from the N-terminus, the 454-residue chain is MTDRTCLSIVLAAGEGTRMKSNLPKVLHQVAGLPLVSHVVTAVQGTGKSDIALVVGRGADDVRAAVEKNAGPVSAFEQKERLGTAHAVLAAREAIERGYDDLLIVFGDTPLIEAQSLQKARERLAEGADVVVIGFRPDNPHGYGRLIEKGDKLVAIIEEKEATEEQKQIGFCNGGLMAVRGQHALALLDAVGNDNAKGEYYLTDIVAIAHSKGMNVTAIEVPVDNVIGINNRVELAEAEAIWQQRKRREMMLAGVTLIAPETVFFSHDTLIEADVIVEPNVFFGPRVHVATGALIHSFSHMEGAYVGPKAEIGPFARLRPGANLGEKTKVGNFCEVKNATVHKGAKINHLTYIGDATVGASSNIGAGTITCNYDGYNKYKTVIGENAFIGSNSSLVAPVEIGDNAYIASGSTITDNVPADALAFGRARQETKEGRAKILREKYAAIKAAKTATK.

Residues 1–232 (MTDRTCLSIV…VDNVIGINNR (232 aa)) are pyrophosphorylase. UDP-N-acetyl-alpha-D-glucosamine is bound by residues 11–14 (LAAG), K25, Q78, and 83–84 (GT). D108 serves as a coordination point for Mg(2+). 4 residues coordinate UDP-N-acetyl-alpha-D-glucosamine: G144, E158, N173, and N230. Position 230 (N230) interacts with Mg(2+). The tract at residues 233-253 (VELAEAEAIWQQRKRREMMLA) is linker. The segment at 254-454 (GVTLIAPETV…AIKAAKTATK (201 aa)) is N-acetyltransferase. UDP-N-acetyl-alpha-D-glucosamine contacts are provided by R319 and K337. H349 acts as the Proton acceptor in catalysis. UDP-N-acetyl-alpha-D-glucosamine is bound by residues Y352 and N363. Acetyl-CoA-binding positions include A366, 372–373 (NY), S391, S409, and R426.

The protein in the N-terminal section; belongs to the N-acetylglucosamine-1-phosphate uridyltransferase family. This sequence in the C-terminal section; belongs to the transferase hexapeptide repeat family. Homotrimer. Mg(2+) is required as a cofactor.

The protein localises to the cytoplasm. The enzyme catalyses alpha-D-glucosamine 1-phosphate + acetyl-CoA = N-acetyl-alpha-D-glucosamine 1-phosphate + CoA + H(+). It catalyses the reaction N-acetyl-alpha-D-glucosamine 1-phosphate + UTP + H(+) = UDP-N-acetyl-alpha-D-glucosamine + diphosphate. Its pathway is nucleotide-sugar biosynthesis; UDP-N-acetyl-alpha-D-glucosamine biosynthesis; N-acetyl-alpha-D-glucosamine 1-phosphate from alpha-D-glucosamine 6-phosphate (route II): step 2/2. It participates in nucleotide-sugar biosynthesis; UDP-N-acetyl-alpha-D-glucosamine biosynthesis; UDP-N-acetyl-alpha-D-glucosamine from N-acetyl-alpha-D-glucosamine 1-phosphate: step 1/1. It functions in the pathway bacterial outer membrane biogenesis; LPS lipid A biosynthesis. In terms of biological role, catalyzes the last two sequential reactions in the de novo biosynthetic pathway for UDP-N-acetylglucosamine (UDP-GlcNAc). The C-terminal domain catalyzes the transfer of acetyl group from acetyl coenzyme A to glucosamine-1-phosphate (GlcN-1-P) to produce N-acetylglucosamine-1-phosphate (GlcNAc-1-P), which is converted into UDP-GlcNAc by the transfer of uridine 5-monophosphate (from uridine 5-triphosphate), a reaction catalyzed by the N-terminal domain. The polypeptide is Bifunctional protein GlmU (Brucella anthropi (strain ATCC 49188 / DSM 6882 / CCUG 24695 / JCM 21032 / LMG 3331 / NBRC 15819 / NCTC 12168 / Alc 37) (Ochrobactrum anthropi)).